Consider the following 350-residue polypeptide: Probable dual-specificity RNA methyltransferase RlmN (350 aa).

E93 serves as the catalytic Proton acceptor. A Radical SAM core domain is found at 99–327 (SSKRLTVCVS…VSVRYSRGVQ (229 aa)). The cysteines at positions 106 and 332 are disulfide-linked. [4Fe-4S] cluster-binding residues include C113, C117, and C120. S-adenosyl-L-methionine contacts are provided by residues 160 to 161 (GE), S190, 213 to 215 (SLH), and N289. C332 serves as the catalytic S-methylcysteine intermediate.

This sequence belongs to the radical SAM superfamily. RlmN family. It depends on [4Fe-4S] cluster as a cofactor.

Its subcellular location is the cytoplasm. The enzyme catalyses adenosine(2503) in 23S rRNA + 2 reduced [2Fe-2S]-[ferredoxin] + 2 S-adenosyl-L-methionine = 2-methyladenosine(2503) in 23S rRNA + 5'-deoxyadenosine + L-methionine + 2 oxidized [2Fe-2S]-[ferredoxin] + S-adenosyl-L-homocysteine. The catalysed reaction is adenosine(37) in tRNA + 2 reduced [2Fe-2S]-[ferredoxin] + 2 S-adenosyl-L-methionine = 2-methyladenosine(37) in tRNA + 5'-deoxyadenosine + L-methionine + 2 oxidized [2Fe-2S]-[ferredoxin] + S-adenosyl-L-homocysteine. In terms of biological role, specifically methylates position 2 of adenine 2503 in 23S rRNA and position 2 of adenine 37 in tRNAs. This is Probable dual-specificity RNA methyltransferase RlmN from Synechocystis sp. (strain ATCC 27184 / PCC 6803 / Kazusa).